The sequence spans 260 residues: Neuraminyllactose-binding hemagglutinin (260 aa).

A signal peptide spans Met-1–Gly-27. The N-palmitoyl cysteine moiety is linked to residue Cys-28. A lipid anchor (S-diacylglycerol cysteine) is attached at Cys-28.

Its subcellular location is the cell outer membrane. The polypeptide is Neuraminyllactose-binding hemagglutinin (hpaA) (Helicobacter pylori (strain J99 / ATCC 700824) (Campylobacter pylori J99)).